The chain runs to 203 residues: Probable cytochrome c oxidase subunit 3 (203 aa).

The next 5 membrane-spanning stretches (helical) occupy residues isoleucine 30–alanine 50, leucine 69–phenylalanine 89, tryptophan 102–tyrosine 122, isoleucine 142–leucine 162, and isoleucine 179–isoleucine 199.

This sequence belongs to the cytochrome c oxidase subunit 3 family.

The protein localises to the cell membrane. It carries out the reaction 4 Fe(II)-[cytochrome c] + O2 + 8 H(+)(in) = 4 Fe(III)-[cytochrome c] + 2 H2O + 4 H(+)(out). The protein is Probable cytochrome c oxidase subunit 3 (ctaE) of Nocardia farcinica (strain IFM 10152).